Consider the following 254-residue polypeptide: tRNA uridine(34) hydroxylase (254 aa).

In terms of domain architecture, Rhodanese spans 123–217 (QDPNVILLDT…YLESIPESES (95 aa)). The active-site Cysteine persulfide intermediate is the Cys-177.

This sequence belongs to the TrhO family.

It catalyses the reaction uridine(34) in tRNA + AH2 + O2 = 5-hydroxyuridine(34) in tRNA + A + H2O. Catalyzes oxygen-dependent 5-hydroxyuridine (ho5U) modification at position 34 in tRNAs. The protein is tRNA uridine(34) hydroxylase of Legionella pneumophila (strain Paris).